Reading from the N-terminus, the 759-residue chain is Probable Na(+)/H(+) antiporter C3A11.09 (759 aa).

11 helical membrane passes run 12–32, 36–56, 105–125, 133–153, 172–192, 206–226, 244–264, 295–315, 319–339, 361–381, and 415–435; these read HLAY…SLII, LFLG…PYVA, MLLP…YALI, SLAI…SIVG, ESGC…YLII, IIIL…GVIA, FLVF…IIGV, VIDL…MPWP, MPHM…ILIA, ALFA…CLVA, and VVCF…AFFM. Phosphothreonine is present on T442. S446 is subject to Phosphoserine. A Phosphothreonine modification is found at T448. 5 stretches are compositionally biased toward basic and acidic residues: residues 514-529, 537-547, 590-601, 622-647, and 655-671; these read LREE…HYDA, YESRQPRRSNE, IDEKLAQGDPKA, NLHE…ENHR, and SESH…RREQ. Disordered regions lie at residues 514–558, 578–606, and 622–759; these read LREE…NPGD, SHTS…SFGR, and NLHE…RAWE. The span at 696–713 shows a compositional bias: polar residues; sequence NENNESSSDTRNGLLSDN. 2 N-linked (GlcNAc...) asparagine glycosylation sites follow: N699 and N713. A compositionally biased stretch (low complexity) spans 724 to 733; sequence RAPSAAVSSE. S735 bears the Phosphoserine mark.

It belongs to the fungal Na(+)/H(+) exchanger family.

Its subcellular location is the membrane. Sodium export from cell, takes up external protons in exchange for internal sodium ions. The protein is Probable Na(+)/H(+) antiporter C3A11.09 (sod22) of Schizosaccharomyces pombe (strain 972 / ATCC 24843) (Fission yeast).